The sequence spans 376 residues: N-acetyldiaminopimelate deacetylase (376 aa).

Aspartate 69 is an active-site residue. The active-site Proton acceptor is glutamate 128.

The protein belongs to the peptidase M20A family. N-acetyldiaminopimelate deacetylase subfamily.

The catalysed reaction is N-acetyl-(2S,6S)-2,6-diaminopimelate + H2O = (2S,6S)-2,6-diaminopimelate + acetate. It functions in the pathway amino-acid biosynthesis; L-lysine biosynthesis via DAP pathway; LL-2,6-diaminopimelate from (S)-tetrahydrodipicolinate (acetylase route): step 3/3. Its function is as follows. Catalyzes the conversion of N-acetyl-diaminopimelate to diaminopimelate and acetate. In Bacillus mycoides (strain KBAB4) (Bacillus weihenstephanensis), this protein is N-acetyldiaminopimelate deacetylase.